A 458-amino-acid polypeptide reads, in one-letter code: Bifunctional protein GlmU (458 aa).

The tract at residues 1–231 (MSNRALSVVV…QTEVEGVNNR (231 aa)) is pyrophosphorylase. UDP-N-acetyl-alpha-D-glucosamine is bound by residues 11 to 14 (LAAG), lysine 25, glutamine 78, 83 to 84 (GT), 105 to 107 (YGD), glycine 142, glutamate 156, asparagine 171, and asparagine 229. Aspartate 107 serves as a coordination point for Mg(2+). A Mg(2+)-binding site is contributed by asparagine 229. A linker region spans residues 232 to 252 (LQLARLERLFQREQAERLLLA). Positions 253–458 (GVMLSDPDRF…ANWTRPVKKK (206 aa)) are N-acetyltransferase. The UDP-N-acetyl-alpha-D-glucosamine site is built by arginine 335 and lysine 353. Histidine 365 functions as the Proton acceptor in the catalytic mechanism. UDP-N-acetyl-alpha-D-glucosamine contacts are provided by tyrosine 368 and asparagine 379. Acetyl-CoA contacts are provided by residues alanine 382, 388–389 (NY), serine 407, alanine 425, and arginine 442.

This sequence in the N-terminal section; belongs to the N-acetylglucosamine-1-phosphate uridyltransferase family. In the C-terminal section; belongs to the transferase hexapeptide repeat family. In terms of assembly, homotrimer. The cofactor is Mg(2+).

The protein localises to the cytoplasm. It carries out the reaction alpha-D-glucosamine 1-phosphate + acetyl-CoA = N-acetyl-alpha-D-glucosamine 1-phosphate + CoA + H(+). The catalysed reaction is N-acetyl-alpha-D-glucosamine 1-phosphate + UTP + H(+) = UDP-N-acetyl-alpha-D-glucosamine + diphosphate. The protein operates within nucleotide-sugar biosynthesis; UDP-N-acetyl-alpha-D-glucosamine biosynthesis; N-acetyl-alpha-D-glucosamine 1-phosphate from alpha-D-glucosamine 6-phosphate (route II): step 2/2. It functions in the pathway nucleotide-sugar biosynthesis; UDP-N-acetyl-alpha-D-glucosamine biosynthesis; UDP-N-acetyl-alpha-D-glucosamine from N-acetyl-alpha-D-glucosamine 1-phosphate: step 1/1. Its pathway is bacterial outer membrane biogenesis; LPS lipid A biosynthesis. Its function is as follows. Catalyzes the last two sequential reactions in the de novo biosynthetic pathway for UDP-N-acetylglucosamine (UDP-GlcNAc). The C-terminal domain catalyzes the transfer of acetyl group from acetyl coenzyme A to glucosamine-1-phosphate (GlcN-1-P) to produce N-acetylglucosamine-1-phosphate (GlcNAc-1-P), which is converted into UDP-GlcNAc by the transfer of uridine 5-monophosphate (from uridine 5-triphosphate), a reaction catalyzed by the N-terminal domain. This is Bifunctional protein GlmU from Sodalis glossinidius (strain morsitans).